Consider the following 100-residue polypeptide: Small ribosomal subunit protein uS14c (100 aa).

Belongs to the universal ribosomal protein uS14 family. In terms of assembly, part of the 30S ribosomal subunit.

The protein localises to the plastid. It is found in the chloroplast. In terms of biological role, binds 16S rRNA, required for the assembly of 30S particles. The protein is Small ribosomal subunit protein uS14c of Pelargonium hortorum (Common geranium).